The following is a 786-amino-acid chain: Ciliated left-right organizer ZP-N domains-containing protein (786 aa).

The N-terminal stretch at 1-18 is a signal peptide; it reads MWGSVAVVWAICLACIQP.

In terms of tissue distribution, expressed specifically by cells of the ciliated left-right organizer.

Functionally, plays a role in left-right patterning process. The sequence is that of Ciliated left-right organizer ZP-N domains-containing protein (Ciroz) from Mus musculus (Mouse).